Reading from the N-terminus, the 434-residue chain is Elongation factor 1-alpha (434 aa).

The 228-residue stretch at 5-232 folds into the tr-type G domain; sequence KPHINLVVIG…DNVHPPKRPV (228 aa). The segment at 14–21 is G1; the sequence is GHVVAGKS. 14–21 is a binding site for GTP; the sequence is GHVVAGKS. The G2 stretch occupies residues 70–74; it reads GITID. The G3 stretch occupies residues 91 to 94; it reads DAPG. GTP contacts are provided by residues 91-95 and 153-156; these read DAPGH and NKMD. The tract at residues 153-156 is G4; that stretch reads NKMD. Residues 196–198 are G5; sequence SGF.

Belongs to the TRAFAC class translation factor GTPase superfamily. Classic translation factor GTPase family. EF-Tu/EF-1A subfamily.

Its subcellular location is the cytoplasm. In terms of biological role, this protein promotes the GTP-dependent binding of aminoacyl-tRNA to the A-site of ribosomes during protein biosynthesis. The sequence is that of Elongation factor 1-alpha from Blastocystis hominis.